Reading from the N-terminus, the 334-residue chain is Anthranilate phosphoribosyltransferase (334 aa).

Residues G81, 84–85 (GD), T89, 91–94 (NIST), 109–117 (KHGSRSVSS), and A121 each bind 5-phospho-alpha-D-ribose 1-diphosphate. Residue G81 participates in anthranilate binding. S93 lines the Mg(2+) pocket. R167 is an anthranilate binding site. Mg(2+)-binding residues include D225 and E226.

Belongs to the anthranilate phosphoribosyltransferase family. In terms of assembly, homodimer. The cofactor is Mg(2+).

The enzyme catalyses N-(5-phospho-beta-D-ribosyl)anthranilate + diphosphate = 5-phospho-alpha-D-ribose 1-diphosphate + anthranilate. It functions in the pathway amino-acid biosynthesis; L-tryptophan biosynthesis; L-tryptophan from chorismate: step 2/5. Catalyzes the transfer of the phosphoribosyl group of 5-phosphorylribose-1-pyrophosphate (PRPP) to anthranilate to yield N-(5'-phosphoribosyl)-anthranilate (PRA). This is Anthranilate phosphoribosyltransferase from Actinobacillus pleuropneumoniae serotype 5b (strain L20).